A 513-amino-acid chain; its full sequence is Pleiotropic regulator 1 (513 aa).

Residue methionine 1 is modified to N-acetylmethionine. The interval 60–79 (TSKENLKEKGPQNATDSYPH) is disordered. Serine 119 is subject to Phosphoserine. The interval 136–160 (VDANRTGPAGSEYRHPGASDRSQPT) is disordered. The residue at position 200 (serine 200) is a Phosphoserine. WD repeat units follow at residues 201-240 (GHLG…LKLS), 243-282 (GHIS…VIRH), 285-324 (GHLS…SVHT), 327-366 (GHTN…TRVT), 369-409 (NHKK…QNLS), 410-448 (GHNA…NFQR), and 459-498 (DSES…TEET). Serine 390 is modified (phosphoserine).

It belongs to the WD repeat PRL1/PRL2 family. In terms of assembly, identified in the spliceosome C complex. Component of the PRP19-CDC5L splicing complex composed of a core complex comprising a homotetramer of PRPF19, CDC5L, PLRG1 and BCAS2, and at least three less stably associated proteins CTNNBL1, CWC15 and HSPA8. Interacts (via its WD40 repeat domain) directly with CDC5L (via its C-terminal); the interaction is required for mRNA splicing but not for spliceosome assembly. Component of the minor spliceosome, which splices U12-type introns. Within this complex, interacts with CRIPT. Also interacts directly in the complex with BCAS2 and PRPF19. Interacts with USB1.

The protein resides in the nucleus. The protein localises to the nucleus speckle. In terms of biological role, involved in pre-mRNA splicing as component of the spliceosome. Component of the PRP19-CDC5L complex that forms an integral part of the spliceosome and is required for activating pre-mRNA splicing. As a component of the minor spliceosome, involved in the splicing of U12-type introns in pre-mRNAs. This chain is Pleiotropic regulator 1 (Plrg1), found in Mus musculus (Mouse).